Here is a 197-residue protein sequence, read N- to C-terminus: Casparian strip membrane protein 4 (197 aa).

Topologically, residues 1–34 (MMSSTTIDVPAESSNVAKGKAVLVAAPRPGGWKK) are cytoplasmic. Residues 35 to 55 (GIAIVDFVLRLGAVAAALGAA) traverse the membrane as a helical segment. The Extracellular segment spans residues 56–85 (TTMATADQTLPFFTQFFQFEASYDSFTTFQ). The helical transmembrane segment at 86–106 (FFVITMALVGCYLVLSLPLSI) threads the bilayer. At 107–118 (VSIIRPHALGPK) the chain is on the cytoplasmic side. The chain crosses the membrane as a helical span at residues 119-139 (LFLIILDTVFLTLATASAASA). The Extracellular portion of the chain corresponds to 140–171 (AAVVYVAHNGNQDSNWLAICNQFGDFCAQTSG). A helical transmembrane segment spans residues 172 to 192 (AVVSSLVAVVVFVLLIVMSAL). The Cytoplasmic portion of the chain corresponds to 193–197 (ALGKH).

This sequence belongs to the Casparian strip membrane proteins (CASP) family. Homodimer and heterodimers.

Its subcellular location is the cell membrane. Its function is as follows. Regulates membrane-cell wall junctions and localized cell wall deposition. Required for establishment of the Casparian strip membrane domain (CSD) and the subsequent formation of Casparian strips, a cell wall modification of the root endodermis that determines an apoplastic barrier between the intraorganismal apoplasm and the extraorganismal apoplasm and prevents lateral diffusion. This Lotus japonicus (Lotus corniculatus var. japonicus) protein is Casparian strip membrane protein 4.